A 339-amino-acid polypeptide reads, in one-letter code: Holliday junction branch migration complex subunit RuvB (339 aa).

Residues 1–22 (MIDADPTLRPEPLPEDNDRALR) form a disordered region. Residues 1-182 (MIDADPTLRP…FGIPTRLQFY (182 aa)) are large ATPase domain (RuvB-L). ATP is bound by residues Leu21, Arg22, Gly63, Lys66, Thr67, Thr68, 129–131 (EDF), Arg172, Tyr182, and Arg219. Mg(2+) is bound at residue Thr67. The tract at residues 183-253 (TIDELFEIVS…LADGALTRLG (71 aa)) is small ATPAse domain (RuvB-S). The segment at 256-339 (QLGLDGADRR…PPKSQSDLFG (84 aa)) is head domain (RuvB-H). Positions 292, 311, and 316 each coordinate DNA.

This sequence belongs to the RuvB family. In terms of assembly, homohexamer. Forms an RuvA(8)-RuvB(12)-Holliday junction (HJ) complex. HJ DNA is sandwiched between 2 RuvA tetramers; dsDNA enters through RuvA and exits via RuvB. An RuvB hexamer assembles on each DNA strand where it exits the tetramer. Each RuvB hexamer is contacted by two RuvA subunits (via domain III) on 2 adjacent RuvB subunits; this complex drives branch migration. In the full resolvosome a probable DNA-RuvA(4)-RuvB(12)-RuvC(2) complex forms which resolves the HJ.

Its subcellular location is the cytoplasm. It catalyses the reaction ATP + H2O = ADP + phosphate + H(+). Functionally, the RuvA-RuvB-RuvC complex processes Holliday junction (HJ) DNA during genetic recombination and DNA repair, while the RuvA-RuvB complex plays an important role in the rescue of blocked DNA replication forks via replication fork reversal (RFR). RuvA specifically binds to HJ cruciform DNA, conferring on it an open structure. The RuvB hexamer acts as an ATP-dependent pump, pulling dsDNA into and through the RuvAB complex. RuvB forms 2 homohexamers on either side of HJ DNA bound by 1 or 2 RuvA tetramers; 4 subunits per hexamer contact DNA at a time. Coordinated motions by a converter formed by DNA-disengaged RuvB subunits stimulates ATP hydrolysis and nucleotide exchange. Immobilization of the converter enables RuvB to convert the ATP-contained energy into a lever motion, pulling 2 nucleotides of DNA out of the RuvA tetramer per ATP hydrolyzed, thus driving DNA branch migration. The RuvB motors rotate together with the DNA substrate, which together with the progressing nucleotide cycle form the mechanistic basis for DNA recombination by continuous HJ branch migration. Branch migration allows RuvC to scan DNA until it finds its consensus sequence, where it cleaves and resolves cruciform DNA. This is Holliday junction branch migration complex subunit RuvB from Ruegeria sp. (strain TM1040) (Silicibacter sp.).